The primary structure comprises 920 residues: B3 domain-containing protein REM17 (920 aa).

3 DNA-binding regions (TF-B3) span residues Asn-12 to Ser-105, Arg-153 to Lys-250, and Cys-267 to Thr-361. 3 disordered regions span residues Asp-405–Val-438, Leu-540–Ser-562, and Asp-585–His-614. The segment covering Asn-423–Ser-432 has biased composition (basic and acidic residues). A DNA-binding region (TF-B3 4) is located at residues Ser-436 to Thr-531. DNA-binding regions (TF-B3) lie at residues Ser-616–Glu-714 and Tyr-727–Ala-823. The segment covering Asn-842–Asp-852 has biased composition (low complexity). The interval Asn-842–Ile-870 is disordered.

The protein resides in the nucleus. The sequence is that of B3 domain-containing protein REM17 (REM17) from Arabidopsis thaliana (Mouse-ear cress).